Reading from the N-terminus, the 189-residue chain is Pyridoxal 5'-phosphate synthase subunit PdxT (189 aa).

46–48 (GES) serves as a coordination point for L-glutamine. Cysteine 78 serves as the catalytic Nucleophile. L-glutamine contacts are provided by residues arginine 107 and 136-137 (IR). Catalysis depends on charge relay system residues histidine 173 and glutamate 175.

The protein belongs to the glutaminase PdxT/SNO family. In the presence of PdxS, forms a dodecamer of heterodimers. Only shows activity in the heterodimer.

The catalysed reaction is aldehydo-D-ribose 5-phosphate + D-glyceraldehyde 3-phosphate + L-glutamine = pyridoxal 5'-phosphate + L-glutamate + phosphate + 3 H2O + H(+). The enzyme catalyses L-glutamine + H2O = L-glutamate + NH4(+). It participates in cofactor biosynthesis; pyridoxal 5'-phosphate biosynthesis. In terms of biological role, catalyzes the hydrolysis of glutamine to glutamate and ammonia as part of the biosynthesis of pyridoxal 5'-phosphate. The resulting ammonia molecule is channeled to the active site of PdxS. This is Pyridoxal 5'-phosphate synthase subunit PdxT from Roseiflexus castenholzii (strain DSM 13941 / HLO8).